The chain runs to 406 residues: Dual-specificity RNA methyltransferase RlmN (406 aa).

Glutamate 119 functions as the Proton acceptor in the catalytic mechanism. One can recognise a Radical SAM core domain in the interval 125-370 (DKGRGTLCVS…AMVRRTRGDD (246 aa)). Cysteine 132 and cysteine 375 are oxidised to a cystine. The [4Fe-4S] cluster site is built by cysteine 139, cysteine 143, and cysteine 146. Residues 192-193 (GE), serine 224, 246-248 (SLH), and asparagine 332 each bind S-adenosyl-L-methionine. The active-site S-methylcysteine intermediate is cysteine 375.

Belongs to the radical SAM superfamily. RlmN family. Requires [4Fe-4S] cluster as cofactor.

The protein localises to the cytoplasm. It catalyses the reaction adenosine(2503) in 23S rRNA + 2 reduced [2Fe-2S]-[ferredoxin] + 2 S-adenosyl-L-methionine = 2-methyladenosine(2503) in 23S rRNA + 5'-deoxyadenosine + L-methionine + 2 oxidized [2Fe-2S]-[ferredoxin] + S-adenosyl-L-homocysteine. It carries out the reaction adenosine(37) in tRNA + 2 reduced [2Fe-2S]-[ferredoxin] + 2 S-adenosyl-L-methionine = 2-methyladenosine(37) in tRNA + 5'-deoxyadenosine + L-methionine + 2 oxidized [2Fe-2S]-[ferredoxin] + S-adenosyl-L-homocysteine. Its function is as follows. Specifically methylates position 2 of adenine 2503 in 23S rRNA and position 2 of adenine 37 in tRNAs. m2A2503 modification seems to play a crucial role in the proofreading step occurring at the peptidyl transferase center and thus would serve to optimize ribosomal fidelity. The chain is Dual-specificity RNA methyltransferase RlmN from Xylella fastidiosa (strain 9a5c).